A 260-amino-acid chain; its full sequence is Cytochrome c oxidase subunit 3 (260 aa).

The next 7 helical transmembrane spans lie at Pro-14–Phe-34, Leu-41–Ile-61, Gly-81–Phe-101, Phe-126–Ala-146, Ala-158–Trp-178, Phe-196–Ile-216, and Ala-238–Trp-258.

This sequence belongs to the cytochrome c oxidase subunit 3 family. As to quaternary structure, component of the cytochrome c oxidase (complex IV, CIV), a multisubunit enzyme composed of a catalytic core of 3 subunits and several supernumerary subunits. The complex exists as a monomer or a dimer and forms supercomplexes (SCs) in the inner mitochondrial membrane with ubiquinol-cytochrome c oxidoreductase (cytochrome b-c1 complex, complex III, CIII).

Its subcellular location is the mitochondrion inner membrane. The catalysed reaction is 4 Fe(II)-[cytochrome c] + O2 + 8 H(+)(in) = 4 Fe(III)-[cytochrome c] + 2 H2O + 4 H(+)(out). Its function is as follows. Component of the cytochrome c oxidase, the last enzyme in the mitochondrial electron transport chain which drives oxidative phosphorylation. The respiratory chain contains 3 multisubunit complexes succinate dehydrogenase (complex II, CII), ubiquinol-cytochrome c oxidoreductase (cytochrome b-c1 complex, complex III, CIII) and cytochrome c oxidase (complex IV, CIV), that cooperate to transfer electrons derived from NADH and succinate to molecular oxygen, creating an electrochemical gradient over the inner membrane that drives transmembrane transport and the ATP synthase. Cytochrome c oxidase is the component of the respiratory chain that catalyzes the reduction of oxygen to water. Electrons originating from reduced cytochrome c in the intermembrane space (IMS) are transferred via the dinuclear copper A center (CU(A)) of subunit 2 and heme A of subunit 1 to the active site in subunit 1, a binuclear center (BNC) formed by heme A3 and copper B (CU(B)). The BNC reduces molecular oxygen to 2 water molecules using 4 electrons from cytochrome c in the IMS and 4 protons from the mitochondrial matrix. This is Cytochrome c oxidase subunit 3 (COIII) from Patiria pectinifera (Starfish).